The primary structure comprises 473 residues: MAVKTYEAGVKDYRQTYWAPEYVPLDSDILACFKITPQPGVDREEAAAAVAAESSTGTWTTVWTDLLTDMDYYKGRAYRIEDVPGDDTCFYAFVAYPIDLFEEGSVVNVFTSLVGNVFGFKAVRALRLEDVRFPLAYVKTCNGPPHGIQVERDKMNKYGRPMLGCTIKPKLGLSAKNYGRAVYECLRGGLDFTKDDENVNSQPFIAWRDRFLFVADAIHTAEAETGERKGHYLNVTAPSPEEMYERAEFAKELNMPIIMHDFLTGGFCANTGLARWCRKNGVLLHIHRAMHAVVDRNPHHGIHFRVLAKALRLSGGDHLHTGTVVGKLEGDRAATQGWVDLLRESFVPEDAGRGIFFDQDWGSMPGVFAVASGGIHVWHMPALLAIFGDDAIFQFGGGTLGHPWGNAAGAAANRVALEACVEARNEGRDLEREGKDILTNAAKDSPELKIALETWKEIKFEFDTVDKLDVVNR.

2 residues coordinate substrate: asparagine 116 and threonine 166. Lysine 168 serves as the catalytic Proton acceptor. Position 170 (lysine 170) interacts with substrate. 3 residues coordinate Mg(2+): lysine 194, aspartate 196, and glutamate 197. Lysine 194 carries the N6-carboxylysine modification. Residue histidine 287 is the Proton acceptor of the active site. Substrate contacts are provided by arginine 288, histidine 320, and serine 372.

Belongs to the RuBisCO large chain family. Type I subfamily. Heterohexadecamer of 8 large chains and 8 small chains. Requires Mg(2+) as cofactor.

The catalysed reaction is 2 (2R)-3-phosphoglycerate + 2 H(+) = D-ribulose 1,5-bisphosphate + CO2 + H2O. It carries out the reaction D-ribulose 1,5-bisphosphate + O2 = 2-phosphoglycolate + (2R)-3-phosphoglycerate + 2 H(+). In terms of biological role, ruBisCO catalyzes two reactions: the carboxylation of D-ribulose 1,5-bisphosphate, the primary event in carbon dioxide fixation, as well as the oxidative fragmentation of the pentose substrate. Both reactions occur simultaneously and in competition at the same active site. In Acidithiobacillus ferrooxidans (Thiobacillus ferrooxidans), this protein is Ribulose bisphosphate carboxylase large chain 1.